The following is a 703-amino-acid chain: Pinin (703 aa).

The residue at position 2 (A2) is an N-acetylalanine. The stretch at 2 to 32 (AVAVRTLQEQLEKAKESLKNVDENIRKLTGR) forms a coiled coil. The tract at residues 46–148 (ALSGPGGGRG…ETPERPGPIF (103 aa)) is disordered. Position 48 is a phosphoserine (S48). R54 bears the Omega-N-methylarginine mark. Residues S58, S66, S96, and S100 each carry the phosphoserine modification. The span at 87-100 (GGERRTRRESRQES) shows a compositional bias: basic and acidic residues. K109 is covalently cross-linked (Glycyl lysine isopeptide (Lys-Gly) (interchain with G-Cter in SUMO2)). Residues S114 and S115 each carry the phosphoserine modification. K121 participates in a covalent cross-link: Glycyl lysine isopeptide (Lys-Gly) (interchain with G-Cter in SUMO2). T125 bears the Phosphothreonine mark. Glycyl lysine isopeptide (Lys-Gly) (interchain with G-Cter in SUMO2) cross-links involve residues K138 and K157. K159 is covalently cross-linked (Glycyl lysine isopeptide (Lys-Gly) (interchain with G-Cter in SUMO1); alternate). K159 participates in a covalent cross-link: Glycyl lysine isopeptide (Lys-Gly) (interchain with G-Cter in SUMO2); alternate. A coiled-coil region spans residues 165 to 236 (ATERQKRRQE…HNAKIIKYIR (72 aa)). Residues 223-285 (EWNEHNAKII…AEQINKMEAR (63 aa)) form a sufficient for PSAP complex assembly region. A Glycyl lysine isopeptide (Lys-Gly) (interchain with G-Cter in SUMO2) cross-link involves residue K230. Residue K240 is modified to N6-acetyllysine; alternate. Residue K240 is modified to N6-succinyllysine; alternate. Residues K281, K306, and K313 each participate in a glycyl lysine isopeptide (Lys-Gly) (interchain with G-Cter in SUMO2) cross-link. Disordered stretches follow at residues 284-314 (ARPR…EGKV), 331-394 (RVGT…EEVM), and 408-703 (AEQE…PGQL). Basic and acidic residues-rich tracts occupy residues 348 to 357 (EIPIVHSDAE) and 366 to 386 (KQEM…EKQQ). S354 is subject to Phosphoserine. Residues 354 to 411 (SDAEKEQEEEEQKQEMEVKMEEETEVRESEKQQDSQPEEVMDVLEMVESVKNVIAEQE) adopt a coiled-coil conformation. Glycyl lysine isopeptide (Lys-Gly) (interchain with G-Cter in SUMO2) cross-links involve residues K366 and K372. 2 positions are modified to phosphoserine: S382 and S388. The span at 417–433 (QVERVEPSENEASKELE) shows a compositional bias: basic and acidic residues. Phosphoserine occurs at positions 450 and 457. Low complexity predominate over residues 479–489 (PMAQPQAQSLP). Glycyl lysine isopeptide (Lys-Gly) (interchain with G-Cter in SUMO2) cross-links involve residues K541 and K549. Position 565 is a phosphoserine (S565). K566 is covalently cross-linked (Glycyl lysine isopeptide (Lys-Gly) (interchain with G-Cter in SUMO2)). Basic residues predominate over residues 572-588 (RSRSRGRARNRTSKSRS). Positions 589 to 642 (RSSSSSSSSSSSTSSSSGSSSSSGSSSSRTSSSSSSTSGSSSRDSSSSTTSSSE) are enriched in low complexity. Basic residues predominate over residues 646–664 (RSRGRGHNRDRKHRRSVDR). The span at 665–676 (KRRDASGLERSH) shows a compositional bias: basic and acidic residues. A phosphoserine mark is found at S670 and S691.

The protein belongs to the pinin family. Found in a mRNA splicing-dependent exon junction complex (EJC). Found in a complex with SR proteins. Found in a mRNP complex with RNPS1. Component of the PSAP complex consisting of RNPS1, SAP18 and PNN. Interacts with PNISR, CTBP1, CTBP2, KRT8, KRT18, KRT19, PS1D/PNO40, PPIG, RNPS1, SFRS4 and SRRM2. Identified in the spliceosome C complex.

It is found in the nucleus speckle. The protein resides in the cell junction. Its subcellular location is the desmosome. Transcriptional activator binding to the E-box 1 core sequence of the E-cadherin promoter gene; the core-binding sequence is 5'CAGGTG-3'. Capable of reversing CTBP1-mediated transcription repression. Auxiliary component of the splicing-dependent multiprotein exon junction complex (EJC) deposited at splice junction on mRNAs. The EJC is a dynamic structure consisting of core proteins and several peripheral nuclear and cytoplasmic associated factors that join the complex only transiently either during EJC assembly or during subsequent mRNA metabolism. Participates in the regulation of alternative pre-mRNA splicing. Associates to spliced mRNA within 60 nt upstream of the 5'-splice sites. Component of the PSAP complex which binds RNA in a sequence-independent manner and is proposed to be recruited to the EJC prior to or during the splicing process and to regulate specific excision of introns in specific transcription subsets. Involved in the establishment and maintenance of epithelia cell-cell adhesion. In Bos taurus (Bovine), this protein is Pinin (PNN).